The chain runs to 1225 residues: MLPNTELHTTEFSKTRKFTRQSFKQIEQLTASLANDRVARHKFLFNNSLPLISDYSGEDSNGHQLQATIKIPDEITNPKEYDPSDYPLAEDESFFKQGHKYDYLVTFRAGSLTNTYEPKTKMYKLHAALDRLMHVKQRKSRFADLWRELCAVIASLDVWYQTTNYPLRTYVKFLFHKGDEFPFYESPSQDKIVFNDKSVASILPTFVYTCCQVGTAIMSGILTHVESIAAMNHFLHCAKDSYIDEKLKVKGIGRSWYQEALHNVGQVTVPVWSQFNEIIGHRTKNTSEPHFVSATFTALRAKRAELLYSEFNDYINRALRLSKTQNDVANYYAACRAMTNDGTFLATLTELSLDAAVFPRIEQRLVTRPAVLMSNARHESLRQKYTDGVGSIAQSYLSSFTDEVARRVNGIHHDEAWLNFLTTSSPGRKLTEIEKLEVGGDVAAWSNSRIVMQAVFAREYRTPERIFKSLKAPIKLVERQQSDRRQRAISGLDNDRLFLSFMPYTIGKQIYDLNDNAAQGKQAGNAFDIGEMLYWTSQRNVLLSSIDVAGMDASVTTNTKDIYNTFVLDVASKCTVPRFGPYYAKNMEVFEVGKRQSQVKYVNAAWQACALEAANSQTSTSYESEIFGQVKNAEGTYPSGRADTSTHHTVLLQGLVRGNELKRASDGKNSCLATIKILGDDIMEIFQGSQDDTHHHAVSNANVLNESGFATTAELSQNSIVLLQQLVVNGTFWGFADRISLWTREDTKDIGRLNLAMMELNALLDDLLFRVRRPEGLKMLGFFCGAICLRRFTLSVDNNLYDSTYNSLSKYMTLIKYDKNPDFDSTLMSLILPLTWLFMPRGGEYPAYPFERRDGTFTEDESMFTARGAYKRRLLYDISNIREMIQQNSLALDDELLHEYGFTGASLLIDLNILDLIDEVKKEDISPVKVSELATSLEQLGKLGEREKSRRAASDLKVRGHALSNDIVYGYGLQEKIQKSAMATKETTVQSKRISLRLHEVIATKTRDYRIPTTPADALHLYEFEGEEVVMDLLPHAKHTSYSNLAYNMSFGSDGWFAFALLGGLDRSAILLRLDVASIRGNYHKFSYDDPVFKQGYKIYKSDATSLDDFFIAISAGPKEQGILLRAFAYYSLYGNVEYHYVLSPRQLFFLSDNPVSAERLVRIPPSYYVSTQCRALYNIFSYLHILRSITSHEGKRLKMVLHAGLIAYVRGTSSSAILPEADTV.

Residues 497-727 (LFLSFMPYTI…NSIVLLQQLV (231 aa)) enclose the RdRp catalytic domain.

This sequence belongs to the reoviridae RNA-directed RNA polymerase family. Interacts with VP6.

It carries out the reaction RNA(n) + a ribonucleoside 5'-triphosphate = RNA(n+1) + diphosphate. Functionally, RNA-directed RNA polymerase that is involved in transcription and genome replication. Following infection, it catalyzes the synthesis of fully conservative plus strands. After core assembly, which consists in recruitment of one capped plus-strand for each genomic segments and polymerase complexes, the polymerase switches mode and catalyzes the synthesis of complementary minus-strands. In Lymantria dispar (Gypsy moth), this protein is RNA-directed RNA polymerase VP2 (S2).